A 197-amino-acid chain; its full sequence is Glycerol-3-phosphate acyltransferase (197 aa).

A run of 5 helical transmembrane segments spans residues 1–21 (MDFI…GLLI), 50–70 (LGFA…VLAA), 82–102 (IVCL…YLGF), 112–132 (LGVF…VFAA), and 159–179 (GASQ…WIKH).

Belongs to the PlsY family. Probably interacts with PlsX.

Its subcellular location is the cell inner membrane. It catalyses the reaction an acyl phosphate + sn-glycerol 3-phosphate = a 1-acyl-sn-glycero-3-phosphate + phosphate. It participates in lipid metabolism; phospholipid metabolism. Catalyzes the transfer of an acyl group from acyl-phosphate (acyl-PO(4)) to glycerol-3-phosphate (G3P) to form lysophosphatidic acid (LPA). This enzyme utilizes acyl-phosphate as fatty acyl donor, but not acyl-CoA or acyl-ACP. The chain is Glycerol-3-phosphate acyltransferase from Desulfotalea psychrophila (strain LSv54 / DSM 12343).